The chain runs to 364 residues: MAHQFPALTSEQKKALSETARRIVANGKGILAADESVGTMGNRLQRIKVENTEENRRQFRELLFTVDSSVSQSIGGVILFHETLYQKDGQGKLFRDILKEKGIVVGIKLDQGVAPLAGTNKETTVQGLDGLSERCAQYKKDGADFGKWRAVLKIDNQCPSHLAIQENANTLARYASIYQQNGLVPIVEPEVIPDGSHDMEHCQYVTEKVLAAVYKALNDHHVYLEGTLLKPNMVTAGHACTKKYTPEQVAMATVTALHRTVPAAVPGICFLSGGMSEEDATLNLNAINLCPLPKPWKLSFSYGRALQASALAAWGGKAENKKATQEAFMKRALANSQAAKGQYVHMGSSDSASTQSLFTASYTY.

Alanine 2 is modified (N-acetylalanine). Lysine 13 is subject to N6-succinyllysine. Serine 36 carries the phosphoserine modification. Phosphothreonine is present on threonine 39. Arginine 43 is a beta-D-fructose 1,6-bisphosphate binding site. The residue at position 119 (threonine 119) is a Phosphothreonine. Lysine 121 carries the post-translational modification N6-succinyllysine. Serine 132 bears the Phosphoserine mark. Glutamate 188 serves as the catalytic Proton acceptor. Lysine 230 (schiff-base intermediate with dihydroxyacetone-P) is an active-site residue. Phosphoserine is present on residues serine 272, serine 276, serine 299, and serine 301. 272–274 is a binding site for beta-D-fructose 1,6-bisphosphate; it reads SGG. A beta-D-fructose 1,6-bisphosphate-binding site is contributed by arginine 304. Position 309 is a phosphoserine (serine 309). The residue at position 317 (lysine 317) is an N6-succinyllysine.

Belongs to the class I fructose-bisphosphate aldolase family. Homotetramer. Interacts with BBS1, BBS2, BBS4 and BBS7. Forms a ternary complex with G6PD and TP53; this interaction is direct.

The protein resides in the cytoplasm. It localises to the cytosol. Its subcellular location is the cytoskeleton. The protein localises to the microtubule organizing center. It is found in the centrosome. The protein resides in the centriolar satellite. The enzyme catalyses beta-D-fructose 1,6-bisphosphate = D-glyceraldehyde 3-phosphate + dihydroxyacetone phosphate. It catalyses the reaction beta-D-fructose 1-phosphate = D-glyceraldehyde + dihydroxyacetone phosphate. It participates in carbohydrate degradation; glycolysis; D-glyceraldehyde 3-phosphate and glycerone phosphate from D-glucose: step 4/4. Its pathway is carbohydrate biosynthesis; gluconeogenesis. It functions in the pathway carbohydrate metabolism; fructose metabolism. Functionally, catalyzes the aldol cleavage of fructose 1,6-biphosphate to form two triosephosphates dihydroxyacetone phosphate and D-glyceraldehyde 3-phosphate in glycolysis as well as the reverse stereospecific aldol addition reaction in gluconeogenesis. In fructolysis, metabolizes fructose 1-phosphate derived from the phosphorylation of dietary fructose by fructokinase into dihydroxyacetone phosphate and D-glyceraldehyde. Acts as an adapter independently of its enzymatic activity, exerts a tumor suppressor role by stabilizing the ternary complex with G6PD and TP53 to inhibit G6PD activity and keep oxidative pentose phosphate metabolism in check. The protein is Fructose-bisphosphate aldolase B (ALDOB) of Ovis aries (Sheep).